A 159-amino-acid chain; its full sequence is Ribosome maturation factor RimP (159 aa).

Belongs to the RimP family.

It localises to the cytoplasm. Functionally, required for maturation of 30S ribosomal subunits. The protein is Ribosome maturation factor RimP of Streptococcus agalactiae serotype III (strain NEM316).